Here is a 352-residue protein sequence, read N- to C-terminus: Protein SIS1 (352 aa).

A J domain is found at 4-70; that stretch reads ETKLYDLLGV…REIYDQYGLE (67 aa). A Phosphoserine modification is found at Ser275. The tract at residues 300–325 is disordered; the sequence is VQPVQPSQTSTYPGQGMPTPKNPSQR. Residues 301 to 312 are compositionally biased toward polar residues; that stretch reads QPVQPSQTSTYP.

Interacts with polyadenylate-binding protein PAB1.

The protein resides in the cytoplasm. It is found in the nucleus. Functionally, required for nuclear migration during mitosis. It is required for the normal initiation of translation. Might mediate the dissociation of a specific protein complex of the translation machinery. Essential for viability. The chain is Protein SIS1 (SIS1) from Saccharomyces cerevisiae (strain ATCC 204508 / S288c) (Baker's yeast).